The chain runs to 185 residues: Translocon-associated protein subunit gamma (185 aa).

An N-acetylmethionine modification is found at M1. Topologically, residues 1–27 are lumenal; the sequence is MAPKGSSKQQSEEDLLLQDFSRNLSAK. Phosphoserine occurs at positions 7 and 11. A helical membrane pass occupies residues 28–48; the sequence is SSALFFGNAFIVSAIPIWLYW. Topologically, residues 49-54 are cytoplasmic; that stretch reads RIWHMD. The chain crosses the membrane as a helical span at residues 55-76; the sequence is LIQSAVLYSVMTLVSTYLVAFA. Topologically, residues 77–135 are lumenal; that stretch reads YKNVKFVLKHKVAQKREDAVSKEVTRKLSEADNRKMSRKEKDERILWKKNEVADYEATT. S105 carries the phosphoserine modification. Residues 136–157 form a helical membrane-spanning segment; it reads FSIFYNNTLFLVVVIVASFFIL. Topologically, residues 158–163 are cytoplasmic; sequence KNFNPT. The chain crosses the membrane as a helical span at residues 164–184; the sequence is VNYILSISASSGLIALLSTGS.

The protein belongs to the TRAP-gamma family. In terms of assembly, heterotetramer of TRAP-alpha, TRAP-beta, TRAP-delta and TRAP-gamma.

It is found in the endoplasmic reticulum membrane. Its function is as follows. TRAP proteins are part of a complex whose function is to bind calcium to the ER membrane and thereby regulate the retention of ER resident proteins. The chain is Translocon-associated protein subunit gamma (SSR3) from Homo sapiens (Human).